The chain runs to 507 residues: Steroid 17-alpha-hydroxylase/17,20 lyase (507 aa).

Position 441 (C441) interacts with heme.

Belongs to the cytochrome P450 family. It depends on heme as a cofactor.

The protein resides in the endoplasmic reticulum membrane. Its subcellular location is the microsome membrane. It catalyses the reaction a C21-steroid + reduced [NADPH--hemoprotein reductase] + O2 = a 17alpha-hydroxy-C21-steroid + oxidized [NADPH--hemoprotein reductase] + H2O + H(+). The enzyme catalyses progesterone + reduced [NADPH--hemoprotein reductase] + O2 = 17alpha-hydroxyprogesterone + oxidized [NADPH--hemoprotein reductase] + H2O + H(+). It carries out the reaction pregnenolone + reduced [NADPH--hemoprotein reductase] + O2 = 17alpha-hydroxypregnenolone + oxidized [NADPH--hemoprotein reductase] + H2O + H(+). The catalysed reaction is 17alpha-hydroxyprogesterone + reduced [NADPH--hemoprotein reductase] + O2 = androst-4-ene-3,17-dione + acetate + oxidized [NADPH--hemoprotein reductase] + H2O + 2 H(+). It catalyses the reaction 17alpha-hydroxyprogesterone + reduced [NADPH--hemoprotein reductase] + O2 = 16alpha,17alpha-dihydroxyprogesterone + oxidized [NADPH--hemoprotein reductase] + H2O + H(+). The enzyme catalyses 16alpha,17alpha-dihydroxyprogesterone + reduced [NADPH--hemoprotein reductase] + O2 = 6beta,16alpha,17alpha-trihydroxyprogesterone + oxidized [NADPH--hemoprotein reductase] + H2O + H(+). It carries out the reaction 17alpha-hydroxypregnenolone + reduced [NADPH--hemoprotein reductase] + O2 = 3beta-hydroxyandrost-5-en-17-one + acetate + oxidized [NADPH--hemoprotein reductase] + H2O + 2 H(+). The catalysed reaction is 16alpha,17alpha-dihydroxypregnenolone + reduced [NADPH--hemoprotein reductase] + O2 = 3beta,16alpha-dihydroxy-androst-5-en-17-one + acetate + oxidized [NADPH--hemoprotein reductase] + H2O + 2 H(+). It catalyses the reaction 3beta-hydroxyandrost-5-en-17-one + reduced [NADPH--hemoprotein reductase] + O2 = 3beta,16alpha-dihydroxy-androst-5-en-17-one + oxidized [NADPH--hemoprotein reductase] + H2O + H(+). The enzyme catalyses androst-4-ene-3,17-dione + reduced [NADPH--hemoprotein reductase] + O2 = 16alpha-hydroxyandrost-4-ene-3,17-dione + oxidized [NADPH--hemoprotein reductase] + H2O + H(+). It functions in the pathway steroid hormone biosynthesis. Its pathway is steroid biosynthesis; glucocorticoid biosynthesis. Its activity is regulated as follows. Regulated predominantly by intracellular cAMP levels. The 17,20-lyase activity is stimulated by cytochrome b5, which acts as an allosteric effector increasing the Vmax of the lyase activity. A cytochrome P450 monooxygenase involved in corticoid and androgen biosynthesis. Catalyzes 17-alpha hydroxylation of C21 steroids, which is common for both pathways. A second oxidative step, required only for androgen synthesis, involves an acyl-carbon cleavage. The 17-alpha hydroxy intermediates, as part of adrenal glucocorticoids biosynthesis pathway, are precursors of cortisol. Hydroxylates steroid hormones, pregnenolone and progesterone to form 17-alpha hydroxy metabolites, followed by the cleavage of the C17-C20 bond to form C19 steroids, dehydroepiandrosterone (DHEA) and androstenedione. Has 16-alpha hydroxylase activity. Catalyzes 16-alpha hydroxylation of 17-alpha hydroxy pregnenolone, followed by the cleavage of the C17-C20 bond to form 16-alpha-hydroxy DHEA. Also 16-alpha hydroxylates androgens, relevant for estriol synthesis. Mechanistically, uses molecular oxygen inserting one oxygen atom into a substrate, and reducing the second into a water molecule, with two electrons provided by NADPH via cytochrome P450 reductase (CPR; NADPH-ferrihemoprotein reductase). In Rattus norvegicus (Rat), this protein is Steroid 17-alpha-hydroxylase/17,20 lyase (Cyp17a1).